The sequence spans 708 residues: MSTADALDDENTFKILVATDIHLGFMEKDAVRGNDTFVTLDEILRLAQENEVDFILLGGDLFHENKPSRKTLHTCLELLRKYCMGDRPVQFEILSDQSVNFGFSKFPWVNYQDGNLNISIPVFSIHGNHDDPTGADALCALDILSCAGFVNHFGRSMSVEKIDISPVLLQKGSTKIALYGLGSIPDERLYRMFVNKKVTMLRPKEDENSWFNLFVIHQNRSKHGSTNFIPEQFLDDFIDLVIWGHEHECKIAPTKNEQQLFYISQPGSSVVTSLSPGEAVKKHVGLLRIKGRKMNMHKIPLHTVRQFFMEDIVLANHPDIFNPDNPKVTQAIQSFCLEKIEEMLENAERERLGNSHQPEKPLVRLRVDYSGGFEPFSVLRFSQKFVDRVANPKDIIHFFRHREQKEKTGEEINFGKLITKPSEGTTLRVEDLVKQYFQTAEKNVQLSLLTERGMGEAVQEFVDKEEKDAIEELVKYQLEKTQRFLKERHIDALEDKIDEEVRRFRETRQKNTNEEDDEVREAMTRARALRSQSEESASAFSADDLMSIDLAEQMANDSDDSISAATNKGRGRGRGRRGGRGQNSASRGGSQRGRADTGLETSTRSRNSKTAVSASRNMSIIDAFKSTRQQPSRNVTTKNYSEVIEVDESDVEEDIFPTTSKTDQRWSSTSSSKIMSQSQVSKGVDFESSEDDDDDPFMNTSSLRRNRR.

N-acetylserine is present on Ser-2. Ser-2 carries the phosphoserine modification. Mn(2+) is bound by residues Asp-20, His-22, and Asp-60. The segment at 87–117 (RPVQFEILSDQSVNFGFSKFPWVNYQDGNLN) is interaction with NBN. Asn-128 contacts Mn(2+). His-129 acts as the Proton donor in catalysis. Mn(2+) contacts are provided by His-217, His-245, and His-247. Residue Lys-255 forms a Glycyl lysine isopeptide (Lys-Gly) (interchain with G-Cter in SUMO2) linkage. Phosphoserine is present on Ser-275. Lys-282 participates in a covalent cross-link: Glycyl lysine isopeptide (Lys-Gly) (interchain with G-Cter in UFM1). Lys-339 participates in a covalent cross-link: Glycyl lysine isopeptide (Lys-Gly) (interchain with G-Cter in ubiquitin). Lys-384 is covalently cross-linked (Glycyl lysine isopeptide (Lys-Gly) (interchain with G-Cter in SUMO)). A Glycyl lysine isopeptide (Lys-Gly) (interchain with G-Cter in SUMO2) cross-link involves residue Lys-416. Lys-467 participates in a covalent cross-link: Glycyl lysine isopeptide (Lys-Gly) (interchain with G-Cter in SUMO). A Glycyl lysine isopeptide (Lys-Gly) (interchain with G-Cter in ubiquitin) cross-link involves residue Lys-480. Disordered regions lie at residues 507–540 (TRQK…ASAF) and 556–614 (NDSD…AVSA). Residues 569 to 579 (GRGRGRGRRGG) are compositionally biased toward basic residues. 9 positions are modified to asymmetric dimethylarginine: Arg-570, Arg-572, Arg-574, Arg-576, Arg-577, Arg-580, Arg-587, Arg-592, and Arg-594. The short motif at 570-594 (RGRGRGRRGGRGQNSASRGGSQRGR) is the GAR element. Residues 599–614 (LETSTRSRNSKTAVSA) are compositionally biased toward polar residues. Ser-619 bears the Phosphoserine mark. Lys-625 participates in a covalent cross-link: Glycyl lysine isopeptide (Lys-Gly) (interchain with G-Cter in SUMO2). Position 641 is a phosphoserine (Ser-641). Ser-649 bears the Phosphoserine; by PLK1 mark. The disordered stretch occupies residues 651–708 (VEEDIFPTTSKTDQRWSSTSSSKIMSQSQVSKGVDFESSEDDDDDPFMNTSSLRRNRR). Positions 667 to 681 (SSTSSSKIMSQSQVS) are enriched in low complexity. Residue Lys-673 is modified to N6-lactoyllysine. 2 positions are modified to phosphoserine; by ATM: Ser-676 and Ser-678. The segment covering 687-696 (ESSEDDDDDP) has biased composition (acidic residues). Phosphoserine; by CDK2 is present on Ser-688. A phosphoserine mark is found at Ser-689 and Ser-701. Positions 698–708 (MNTSSLRRNRR) are enriched in polar residues.

It belongs to the MRE11/RAD32 family. As to quaternary structure, component of the MRN complex composed of two heterodimers RAD50 and MRE11 associated with a single NBN. The MRN complexes dimerize on DNA to form joined MRN-MRN oligomers required for DNA double-strand break repair. As part of the MRN complex, interacts with MCM9; the interaction recruits the complex to DNA repair sites. Component of the BASC complex, at least composed of BRCA1, MSH2, MSH6, MLH1, ATM, BLM, RAD50, MRE11 and NBN. Found in a complex with TERF2. Interacts with DCLRE1C/Artemis and DCLRE1B/Apollo. Interacts with ATF2. Interacts with EXD2. Interacts with MRNIP. Interacts with SAMHD1; leading to stimulate 3'-5' exonuclease activity. Interacts (when ubiquitinated) with UBQLN4 (via its UBA domain). Interacts with CYREN (via XLF motif). Interacts with GFI1; promoting methylation by PRMT1. Interacts with DYNLL1; inhibiting the activity of MRE11. Interacts with C1QBP and RAD50; interaction takes place in absence of DNA damage to form the MRC (MRE11-RAD50-C1QBP) complex that inhibits the activity of MRE11. Interacts with AGER/RAGE. AGER is recruited to DNA double-strand break sites where it enhances MRE11 endonuclease activity to promote DNA repair. In terms of assembly, (Microbial infection) Interacts with herpes simplex virus 1 protein UL12. The cofactor is Mn(2+). Post-translationally, phosphorylated by ATM at Ser-676 and Ser-678 in response to DNA damage, promoting MRE11 activity: phosphorylation activates MRE11 by preventing the interaction between MRE11 and the C1QBP inhibitor. Phosphorylation at Ser-649 by PLK1 primes for phosphorylation at Ser-688 by CK2, inhibiting recruitment of the MRN complex to DNA damage sites. In terms of processing, asymmetric dimethylation by PRMT1 promotes MRE11 exonuclease activity. Lactylation at Lys-673 by CREBBP/CBP in response to DNA damage promotes DNA binding and MRE11 activity. Post-translationally, acetylated on lysine residues by KAT2A /GCN5. In terms of processing, ubiquitinated following DNA damage. Ubiquitination triggers interaction with UBQLN4, leading to MRE11 removal from chromatin and degradation by the proteasome. Ubiquitinated at Lys-339 and Lys-480 by RNF126 via 'Lys-27'- and 'Lys-29'-linked polyubiquitin chains, promoting the exonuclease activity of MRE11. SUMOylated by PIAS1, stabilizing MRE11 on chromatin during end resection. DeSUMOylated by SENP3 following removal from DNA double-strand breaks (DSBs). Post-translationally, ufmylation at Lys-282 promotes MRE11 activity and is required for activation of the ATM and ATR kinases by the MRN complex. In terms of processing, (Microbial infection) Following infection by adenovirus E4, ubiquitinated and degraded by a SCF-like E3 ubiquitin ligase complex containing viral proteins E1B-55K and E4-ORF6.

The protein resides in the nucleus. It localises to the chromosome. It is found in the telomere. Interaction with SAMHD1 stimulates the double-strand-specific 3'-5' exonuclease activity. RBBP8/CtIP specifically promotes the endonuclease activity to clear protein-DNA adducts and generate clean double-strand break ends. DYNLL1-binding inhibits the activity of MRE11. MRE11 activity is inhibited by C1QBP: in absence of DNA damage, C1QBP interacts with unphosphorylated MRE11, preventing formation and activity of the MRN complex. The mirin-derivative PFM39, specifically inhibits the 3'-5' exonuclease activity. The N-alkylated mirin-derivatives PFM03 and PFM01 specifically inhibit the endonuclease activity. Functionally, core component of the MRN complex, which plays a central role in double-strand break (DSB) repair, DNA recombination, maintenance of telomere integrity and meiosis. The MRN complex is involved in the repair of DNA double-strand breaks (DSBs) via homologous recombination (HR), an error-free mechanism which primarily occurs during S and G2 phases. The complex (1) mediates the end resection of damaged DNA, which generates proper single-stranded DNA, a key initial steps in HR, and is (2) required for the recruitment of other repair factors and efficient activation of ATM and ATR upon DNA damage. Within the MRN complex, MRE11 possesses both single-strand endonuclease activity and double-strand-specific 3'-5' exonuclease activity. After DSBs, MRE11 is loaded onto DSBs sites and cleaves DNA by cooperating with RBBP8/CtIP to initiate end resection. MRE11 first endonucleolytically cleaves the 5' strand at DNA DSB ends to prevent non-homologous end joining (NHEJ) and licence HR. It then generates a single-stranded DNA gap via 3' to 5' exonucleolytic degradation to create entry sites for EXO1- and DNA2-mediated 5' to 3' long-range resection, which is required for single-strand invasion and recombination. RBBP8/CtIP specifically promotes the endonuclease activity of MRE11 to clear protein-DNA adducts and generate clean double-strand break ends. MRE11 endonuclease activity is also enhanced by AGER/RAGE. The MRN complex is also required for DNA damage signaling via activation of the ATM and ATR kinases: the nuclease activity of MRE11 is not required to activate ATM and ATR. The MRN complex is also required for the processing of R-loops. The MRN complex is involved in the activation of the cGAS-STING pathway induced by DNA damage during tumorigenesis: the MRN complex acts by displacing CGAS from nucleosome sequestration, thereby activating it. In telomeres the MRN complex may modulate t-loop formation. Its function is as follows. MRE11 contains two DNA-binding domains (DBDs), enabling it to bind both single-stranded DNA (ssDNA) and double-stranded DNA (dsDNA). In Homo sapiens (Human), this protein is Double-strand break repair protein MRE11.